Here is a 716-residue protein sequence, read N- to C-terminus: Translation initiation factor IF-2 (716 aa).

The segment at 50–137 (FKKSAKPAGN…KPKKELPEKI (88 aa)) is disordered. The span at 92–101 (NNVQNTQFNN) shows a compositional bias: low complexity. Residues 102 to 118 (KNKKKNNNNKKNKRGKN) show a composition bias toward basic residues. Over residues 125–137 (KQFKPKKELPEKI) the composition is skewed to basic and acidic residues. The tr-type G domain occupies 217–386 (IRPPVVTIMG…LLVSEVEELK (170 aa)). Residues 226-233 (GHVDHGKT) form a G1 region. 226–233 (GHVDHGKT) serves as a coordination point for GTP. Residues 251-255 (GITQH) are G2. Residues 272–275 (DTPG) are G3. Residues 272–276 (DTPGH) and 326–329 (NKID) contribute to the GTP site. Residues 326-329 (NKID) are G4. The segment at 362–364 (SAL) is G5.

Belongs to the TRAFAC class translation factor GTPase superfamily. Classic translation factor GTPase family. IF-2 subfamily.

It is found in the cytoplasm. One of the essential components for the initiation of protein synthesis. Protects formylmethionyl-tRNA from spontaneous hydrolysis and promotes its binding to the 30S ribosomal subunits. Also involved in the hydrolysis of GTP during the formation of the 70S ribosomal complex. The sequence is that of Translation initiation factor IF-2 from Bacillus licheniformis (strain ATCC 14580 / DSM 13 / JCM 2505 / CCUG 7422 / NBRC 12200 / NCIMB 9375 / NCTC 10341 / NRRL NRS-1264 / Gibson 46).